The chain runs to 88 residues: UPF0250 protein bbp_432 (88 aa).

This sequence belongs to the UPF0250 family.

The polypeptide is UPF0250 protein bbp_432 (Buchnera aphidicola subsp. Baizongia pistaciae (strain Bp)).